Here is a 208-residue protein sequence, read N- to C-terminus: GTP-binding protein YPTM1 (208 aa).

Residues 15 to 23 (GDSSVGKSC), 33 to 40 (YVDSYIST), 63 to 67 (DTAGQ), 121 to 124 (NKCD), and 151 to 153 (SAK) contribute to the GTP site. An Effector region motif is present at residues 37 to 45 (YISTIGVDF). A disordered region spans residues 189 to 208 (QMKGRPIQQEQQKSSRCCST). The span at 196–208 (QQEQQKSSRCCST) shows a compositional bias: polar residues. 2 S-geranylgeranyl cysteine lipidation sites follow: C205 and C206.

It belongs to the small GTPase superfamily. Rab family. Low levels in coleoptiles.

It localises to the cell membrane. Protein transport. Probably involved in vesicular traffic. This Zea mays (Maize) protein is GTP-binding protein YPTM1 (YPTM1).